A 353-amino-acid chain; its full sequence is Putative permease PerM (353 aa).

7 helical membrane-spanning segments follow: residues 19-39, 72-92, 156-176, 217-237, 240-260, 281-301, and 310-330; these read IALL…SGLL, IVLV…LPIA, LVGL…VFFL, VLEM…FGLN, LLLA…AFVV, CFAV…PVLF, and LVII…GVFF.

It belongs to the autoinducer-2 exporter (AI-2E) (TC 2.A.86) family.

It localises to the cell membrane. This Escherichia coli O157:H7 protein is Putative permease PerM (perM).